The primary structure comprises 178 residues: Large ribosomal subunit protein uL10 (178 aa).

Belongs to the universal ribosomal protein uL10 family. In terms of assembly, part of the ribosomal stalk of the 50S ribosomal subunit. The N-terminus interacts with L11 and the large rRNA to form the base of the stalk. The C-terminus forms an elongated spine to which L12 dimers bind in a sequential fashion forming a multimeric L10(L12)X complex.

In terms of biological role, forms part of the ribosomal stalk, playing a central role in the interaction of the ribosome with GTP-bound translation factors. This chain is Large ribosomal subunit protein uL10, found in Dictyoglomus thermophilum (strain ATCC 35947 / DSM 3960 / H-6-12).